A 523-amino-acid chain; its full sequence is 2-hydroxyisoflavanone synthase (523 aa).

Residues 2–22 (LVELAITLLVIALFIHLRPTP) form a helical membrane-spanning segment. Cys450 is a binding site for heme.

Belongs to the cytochrome P450 family. The cofactor is heme.

The protein resides in the microsome membrane. The catalysed reaction is (2S)-liquiritigenin + reduced [NADPH--hemoprotein reductase] + O2 = (2R,3S)-2,4',7-trihydroxyisoflavanone + oxidized [NADPH--hemoprotein reductase] + H2O + H(+). It carries out the reaction (2S)-naringenin + reduced [NADPH--hemoprotein reductase] + O2 = 2-hydroxy-2,3-dihydrogenistein + oxidized [NADPH--hemoprotein reductase] + H2O + H(+). Functionally, 2-hydroxyisoflavanone synthase, which catalyzes the hydroxylation associated with 1,2-aryl migration of flavanones. Converts liquiritigenin and naringenin into highly unstable precursors of the isoflavones daidzein and genistein. In Glycyrrhiza uralensis (Chinese licorice), this protein is 2-hydroxyisoflavanone synthase (CYP93C2).